A 547-amino-acid chain; its full sequence is Chaperonin GroEL 2 (547 aa).

Residues 30 to 33 (TLGP), Lys-51, 87 to 91 (DGTTT), Gly-415, and Asp-496 each bind ATP.

Belongs to the chaperonin (HSP60) family. Forms a cylinder of 14 subunits composed of two heptameric rings stacked back-to-back. Interacts with the co-chaperonin GroES.

It is found in the cytoplasm. The catalysed reaction is ATP + H2O + a folded polypeptide = ADP + phosphate + an unfolded polypeptide.. Its function is as follows. Together with its co-chaperonin GroES, plays an essential role in assisting protein folding. The GroEL-GroES system forms a nano-cage that allows encapsulation of the non-native substrate proteins and provides a physical environment optimized to promote and accelerate protein folding. This Rhodopseudomonas palustris (strain ATCC BAA-98 / CGA009) protein is Chaperonin GroEL 2.